Reading from the N-terminus, the 409-residue chain is TM2 domain-containing protein ZK858.5 (409 aa).

Positions 8–55 constitute a TM2 domain; that stretch reads VKPWIVRIILIVGGLFGAHRLYLKQVPEAFVFFSTLGVLLIGWLYDSF. 6 consecutive transmembrane segments (helical) span residues 10 to 30, 37 to 57, 104 to 124, 127 to 147, 168 to 190, and 209 to 229; these read PWIV…RLYL, FVFF…SFMF, VLYG…TFGW, INLI…IYII, MFIM…AIVS, and HFLF…LGCS.

The protein belongs to the TM2 family.

It localises to the membrane. The protein is TM2 domain-containing protein ZK858.5 of Caenorhabditis elegans.